The sequence spans 248 residues: Tryptophan synthase alpha chain (248 aa).

Active-site proton acceptor residues include glutamate 36 and aspartate 47.

It belongs to the TrpA family. In terms of assembly, tetramer of two alpha and two beta chains.

It catalyses the reaction (1S,2R)-1-C-(indol-3-yl)glycerol 3-phosphate + L-serine = D-glyceraldehyde 3-phosphate + L-tryptophan + H2O. Its pathway is amino-acid biosynthesis; L-tryptophan biosynthesis; L-tryptophan from chorismate: step 5/5. In terms of biological role, the alpha subunit is responsible for the aldol cleavage of indoleglycerol phosphate to indole and glyceraldehyde 3-phosphate. In Pyrococcus furiosus (strain ATCC 43587 / DSM 3638 / JCM 8422 / Vc1), this protein is Tryptophan synthase alpha chain.